The following is a 92-amino-acid chain: UPF0250 protein XOO3732 (92 aa).

Belongs to the UPF0250 family.

This chain is UPF0250 protein XOO3732, found in Xanthomonas oryzae pv. oryzae (strain MAFF 311018).